The following is a 143-amino-acid chain: UPF0251 protein Rru_A1194 (143 aa).

Residues 100–143 (LDGSACPNRRQRRGPCARRGAAGALARQTGDEPPSSPTDNEKDD) are disordered. Positions 116-126 (ARRGAAGALAR) are enriched in low complexity.

It belongs to the UPF0251 family.

This is UPF0251 protein Rru_A1194 from Rhodospirillum rubrum (strain ATCC 11170 / ATH 1.1.1 / DSM 467 / LMG 4362 / NCIMB 8255 / S1).